The sequence spans 346 residues: MTSRIDKTIARQREKIASGAYYEAHQQLRVIAARYIKQSNYEAAAEILAGGATALLRAGSQQGASASGGDLAIMLVDEVYTKAGWGITGGDDDAEGRARKKRLIELLREFPSEEPTRKRFIQEMIGWSGRFGPVERGDAELHHAAGSVYAEDNEPYDAEKHLVLGTSESAETLAKLEYEWYTNDEPHTAAIYASRAVFPYLLVGNLRNANKAFLVFTSRLSSSNTSLGVQEVSSASSDVRVFPSLPLLNFISMLLLTIQRGSADLFKQLTAHYASQIREVGIWDDALSQIGEQYFAIKVPRQGNPLLDMMGSMLFGGQNQGGSRRTPQGRSQSKTVEAPPASMELD.

A disordered region spans residues 317 to 346; that stretch reads GQNQGGSRRTPQGRSQSKTVEAPPASMELD. Residues 321 to 335 show a composition bias toward polar residues; the sequence is GGSRRTPQGRSQSKT.

Belongs to the GET4 family. Component of the get4/get5/sgt2 sorting complex.

It localises to the cytoplasm. In terms of biological role, component of the get4/get5/sgt2 sorting complex involved in the GET (guided entry of TA proteins) pathway that leads to the insertion of tail-anchored (TA) proteins into the endoplasmic reticulum. Get4 and get5 form an obligate complex that catalyzes the transfer of tail-anchored proteins destined to the endoplasmic reticulum from sgt2 to the cytosolic targeting factor which then targets the TA protein to the ER membrane via get1/get2. In Aspergillus fumigatus (strain ATCC MYA-4609 / CBS 101355 / FGSC A1100 / Af293) (Neosartorya fumigata), this protein is Golgi to ER traffic protein 4.